The sequence spans 94 residues: Alpha-conotoxin Ms20.3 (94 aa).

Residues 1–24 (MPKLAVVLLVLLILPLSYFDAAGG) form the signal peptide. A propeptide spanning residues 25–45 (QVVQGDRRGNGLARYLQRGDR) is cleaved from the precursor. Glu-49 carries the 4-carboxyglutamate modification. Position 55 is a 4-hydroxyproline (Pro-55). 4 cysteine pairs are disulfide-bonded: Cys-63/Cys-72, Cys-68/Cys-80, Cys-73/Cys-90, and Cys-78/Cys-92.

It belongs to the conotoxin D superfamily. Hetero-, homo- or pseudo-homodimer (identical sequence, different post-translational modifications). Homodimer of [carboxyGlu-49, hydroxyPro-55]Ms20.3, and heterodimer of [carboxyGlu-49, hydroxyPro-55]Ms20.3 and [carboxy'Glu-50', hydroxy'Pro-56']Ms20.5 may exist. In terms of tissue distribution, expressed by the venom duct.

The protein resides in the secreted. Its function is as follows. Alpha-D-conopeptides act on postsynaptic membranes, they bind to the nicotinic acetylcholine receptors (nAChR) and thus inhibit them. Through its two C-terminal domains, this homodimeric protein would bind to two nAChR allosteric sites, located outside the nAChR C-loop of the principal binding face and at the adjacent binding interface in a clockwise direction. This toxin specifically blocks mammalian neuronal nAChR of the alpha-7/CHRNA7 (IC(50)=0.12 nM), alpha-3-beta-2/CHRNA3-CHRNB2 (IC(50)=1.08 nM), and alpha-4-beta-2/CHRNA4-CHRNB2 (IC(50)=4.5 nM) subtypes. Has no effect on alpha-3-beta-4/CHRNA3-CHRNB4, alpha-4-beta-4/CHRNA4-CHRNB4 and alpha-1-beta-1-epsilon-delta/CHRNA1-CHRNB1-CHRNE-CHRND subtypes of nAChRs. In Conus mustelinus (Weasel cone), this protein is Alpha-conotoxin Ms20.3.